We begin with the raw amino-acid sequence, 664 residues long: DNA mismatch repair protein MutL (664 aa).

This sequence belongs to the DNA mismatch repair MutL/HexB family.

Its function is as follows. This protein is involved in the repair of mismatches in DNA. It is required for dam-dependent methyl-directed DNA mismatch repair. May act as a 'molecular matchmaker', a protein that promotes the formation of a stable complex between two or more DNA-binding proteins in an ATP-dependent manner without itself being part of a final effector complex. The protein is DNA mismatch repair protein MutL of Clostridium beijerinckii (strain ATCC 51743 / NCIMB 8052) (Clostridium acetobutylicum).